The following is a 390-amino-acid chain: LL-diaminopimelate aminotransferase 2 (390 aa).

Substrate contacts are provided by Tyr13 and Gly38. Pyridoxal 5'-phosphate-binding positions include Tyr67, 102–103, Tyr127, Asn177, Tyr208, and 236–238; these read SK and SLS. Substrate contacts are provided by Lys103, Tyr127, and Asn177. Lys239 is subject to N6-(pyridoxal phosphate)lysine. Arg247 lines the pyridoxal 5'-phosphate pocket. Position 365 (Arg365) interacts with substrate.

It belongs to the class-I pyridoxal-phosphate-dependent aminotransferase family. LL-diaminopimelate aminotransferase subfamily. As to quaternary structure, homodimer. The cofactor is pyridoxal 5'-phosphate.

It catalyses the reaction (2S,6S)-2,6-diaminopimelate + 2-oxoglutarate = (S)-2,3,4,5-tetrahydrodipicolinate + L-glutamate + H2O + H(+). It participates in amino-acid biosynthesis; L-lysine biosynthesis via DAP pathway; LL-2,6-diaminopimelate from (S)-tetrahydrodipicolinate (aminotransferase route): step 1/1. Involved in the synthesis of meso-diaminopimelate (m-DAP or DL-DAP), required for both lysine and peptidoglycan biosynthesis. Catalyzes the direct conversion of tetrahydrodipicolinate to LL-diaminopimelate. In Nostoc sp. (strain PCC 7120 / SAG 25.82 / UTEX 2576), this protein is LL-diaminopimelate aminotransferase 2.